Consider the following 581-residue polypeptide: Sodium/hydrogen exchanger 8 (581 aa).

11 helical membrane passes run 60–80, 84–104, 123–143, 156–176, 191–211, 264–284, 311–331, 354–374, 379–399, 417–437, and 451–471; these read MTIF…HLLI, LHFL…GAVI, PNMF…YSLH, LFAV…IYFL, FAFG…IFNA, FLKM…ISAL, GLAE…GIVM, VAFL…FSFP, ISFV…NIFP, MFIM…SLHL, and TTIV…MPLI. Threonine 510 bears the Phosphothreonine mark. Phosphoserine is present on residues serine 571 and serine 573.

This sequence belongs to the monovalent cation:proton antiporter 1 (CPA1) transporter (TC 2.A.36) family. As to expression, ubiquitous. Strongly expressed in skeletal muscle and kidney. Detected throughout the entire gastrointestinal tract, with high expression detected in stomach, duodenum and ascending colon.

The protein localises to the golgi apparatus membrane. It is found in the golgi apparatus. Its subcellular location is the trans-Golgi network membrane. The protein resides in the endosome. It localises to the multivesicular body membrane. The protein localises to the apical cell membrane. It is found in the cytoplasmic vesicle. Its subcellular location is the secretory vesicle. The protein resides in the acrosome. It carries out the reaction Na(+)(in) + H(+)(out) = Na(+)(out) + H(+)(in). HOE642 inhibits SLC9A8 activity. Its function is as follows. Na(+)/H(+) antiporter. Mediates the electoneutral exchange of intracellular H(+) ions for extracellular Na(+) in 1:1 stoichiometry. Acts as an Na(+)/H(+) exchanger in the trans-Golgi. Contributes to the regulation of pH regulation of Golgi apparatus, and consequently, in protein trafficking and endosomal morphology. In germ cells, plays a crucial role in acrosome biogenesis and sperm development, probably by playing a role in the fusion of the Golgi-derived vesicles that form the acrosomal cap. Can also be active at the cell surface of specialized cells. In the small intestine, at the cell membrane, plays a major physiological role in transepithelial absorption of Na(+) and regulates intracellular pH homeostasis of intestinal epithelial cells. Acts as an important regulator of mucosal integrity in the intestine and in the stomach, could mediate the pH fluctuation necessary for mucin exocytosis or assist membrane trafficking of other proteins. Plays a role in photoreceptor survival and in the maintenance of intracellular pH homeostasis in retinal pigment epithelium (RPE cells). In Homo sapiens (Human), this protein is Sodium/hydrogen exchanger 8.